We begin with the raw amino-acid sequence, 1339 residues long: Receptor tyrosine-protein kinase erbB-3 (1339 aa).

The signal sequence occupies residues 1–19; it reads MRATGTLQVLCFLLSLARG. The Extracellular segment spans residues 20–643; that stretch reads SEMGNSQAVC…EVLMSKPHLV (624 aa). Residue N126 is glycosylated (N-linked (GlcNAc...) asparagine). Disulfide bonds link C186–C194, C190–C202, C210–C218, C214–C226, C227–C235, C231–C243, C246–C255, C259–C286, C290–C301, C305–C320, and C323–C327. Residue N250 is glycosylated (N-linked (GlcNAc...) asparagine). Residues N353, N408, N414, N437, and N469 are each glycosylated (N-linked (GlcNAc...) asparagine). Disulfide bonds link C500-C509, C504-C517, C520-C529, C533-C549, C552-C565, C556-C573, C576-C585, C589-C610, C613-C621, and C617-C629. N522 is a glycosylation site (N-linked (GlcNAc...) asparagine). N566 carries an N-linked (GlcNAc...) asparagine glycan. N-linked (GlcNAc...) asparagine glycosylation is present at N616. The helical transmembrane segment at 644-662 threads the bilayer; that stretch reads IAVTVGLAVILMILGGSFL. Residues 663–1339 are Cytoplasmic-facing; sequence YWRGRRIQNK…LFPKANAQRT (677 aa). Position 684 is a phosphoserine (S684). The Protein kinase domain maps to 707-964; it reads LRKLKVLGSG…TFKELANEFT (258 aa). ATP contacts are provided by residues 713-721, K740, 786-788, and 832-837; these read LGSGVFGTV, QYL, and DLALRN. D832 (proton acceptor) is an active-site residue. S980 bears the Phosphoserine mark. The segment covering 1023-1036 has biased composition (low complexity); that stretch reads SLGSALSLPTGTLT. 2 disordered regions span residues 1023–1052 and 1078–1215; these read SLGSALSLPTGTLTRPRGSQSLLSPSSGYM and PISL…GSLE. The segment covering 1039 to 1052 has biased composition (polar residues); sequence RGSQSLLSPSSGYM. Positions 1172 to 1184 are enriched in low complexity; it reads GTLSSVGLSSVLG. Positions 1185 to 1195 are enriched in acidic residues; it reads TEEEDEDEEYE.

The protein belongs to the protein kinase superfamily. Tyr protein kinase family. EGF receptor subfamily. Monomer and homodimer. Heterodimer with each of the other ERBB receptors (Potential). Interacts with CSPG5, PA2G4, GRB7, MYOC and MUC1. Found in a ternary complex with NRG1 and ITGAV:ITGB3 or ITGA6:ITGB4. In terms of processing, autophosphorylated. Ligand-binding increases phosphorylation on tyrosine residues and promotes its association with the p85 subunit of phosphatidylinositol 3-kinase.

The protein localises to the membrane. It catalyses the reaction L-tyrosyl-[protein] + ATP = O-phospho-L-tyrosyl-[protein] + ADP + H(+). Its function is as follows. Tyrosine-protein kinase that plays an essential role as cell surface receptor for neuregulins. Binds to neuregulin-1 (NRG1) and is activated by it; ligand-binding increases phosphorylation on tyrosine residues and promotes its association with the p85 subunit of phosphatidylinositol 3-kinase. May also be activated by CSPG5. Involved in the regulation of myeloid cell differentiation. The protein is Receptor tyrosine-protein kinase erbB-3 (Erbb3) of Rattus norvegicus (Rat).